We begin with the raw amino-acid sequence, 98 residues long: PsbF-like protein (98 aa).

2 helical membrane passes run 5-25 and 73-93; these read VLLVISPIIFAWIFTVFWLGK and TAAVNALGIPTVFFLGAILAM.

The protein belongs to the PsbE/PsbF family.

The protein resides in the membrane. In terms of biological role, unknown. Resembles PsbF, one of the subunits of the photosystem II reaction center. However, it encodes asparagine rather than histidine at the site PsbF uses to bind heme. This chain is PsbF-like protein, found in Prochlorococcus marinus (strain MIT 9312).